We begin with the raw amino-acid sequence, 248 residues long: Floral homeotic protein AGAMOUS (248 aa).

One can recognise an MADS-box domain in the interval 19-73 (RGKIEIKRIENTTNRQVTFCKRRNGLLKKAYELSVLCDAEVALIVFSSRGRLYEY). The K-box domain occupies 103-193 (AQYYQQEASK…RAKIAETERA (91 aa)). The disordered stretch occupies residues 196–219 (QQQQQQMNLMPGSSSYELVPPPHQ). The span at 202-211 (MNLMPGSSSY) shows a compositional bias: polar residues.

The protein resides in the nucleus. Its function is as follows. Probable transcription factor involved in regulating genes that determines stamen and carpel development in wild-type flowers. The polypeptide is Floral homeotic protein AGAMOUS (AG1) (Nicotiana tabacum (Common tobacco)).